Consider the following 456-residue polypeptide: CBL-interacting protein kinase 9 (456 aa).

Residues 27–282 (YELGKTIGEG…IAQILEDDWF (256 aa)) form the Protein kinase domain. Residues 33-41 (IGEGSFAKV) and lysine 56 each bind ATP. Aspartate 150 functions as the Proton acceptor in the catalytic mechanism. The activation loop stretch occupies residues 168-197 (DFGLSAFAPQTKEDGLLHTACGTPNYVAPE). Positions 318 to 343 (REKPESMNAFALISRSQGFNLGNLFE) constitute an NAF domain. Residues 351–380 (KRETSFTSQCTPQEIMSKIEEACGPLGFNV) form a PPI region.

This sequence belongs to the protein kinase superfamily. CAMK Ser/Thr protein kinase family. SNF1 subfamily. The cofactor is Mn(2+).

The catalysed reaction is L-seryl-[protein] + ATP = O-phospho-L-seryl-[protein] + ADP + H(+). It carries out the reaction L-threonyl-[protein] + ATP = O-phospho-L-threonyl-[protein] + ADP + H(+). In terms of biological role, CIPK serine-threonine protein kinases interact with CBL proteins. Binding of a CBL protein to the regulatory NAF domain of CIPK protein lead to the activation of the kinase in a calcium-dependent manner. The chain is CBL-interacting protein kinase 9 (CIPK9) from Oryza sativa subsp. japonica (Rice).